A 280-amino-acid chain; its full sequence is Cell division protein SepF (280 aa).

Residues 22–117 (DYVDDRAPRA…DDYPEDAYGE (96 aa)) form a disordered region. Basic and acidic residues-rich tracts occupy residues 25–36 (DDRAPRASERGG) and 53–83 (RYGE…GADR).

The protein belongs to the SepF family. Homodimer. Interacts with FtsZ.

Its subcellular location is the cytoplasm. Cell division protein that is part of the divisome complex and is recruited early to the Z-ring. Probably stimulates Z-ring formation, perhaps through the cross-linking of FtsZ protofilaments. Its function overlaps with FtsA. This chain is Cell division protein SepF, found in Nocardia farcinica (strain IFM 10152).